We begin with the raw amino-acid sequence, 367 residues long: HTH-type transcriptional regulator GbdR (367 aa).

The HTH araC/xylS-type domain maps to 227-325 (QEIVALMEAN…GIPPRDERQG (99 aa)). DNA-binding regions (H-T-H motif) lie at residues 244-265 (DELA…QKYL) and 292-315 (IIEV…REYF).

Its function is as follows. Specific regulator of choline metabolism, which activates transcription of at least 25 genes from 11 promoters in response to choline metabolites. Required for the induction of plcH, encoding the phospholipase C, and pchP, encoding the phosphorylcholine phosphatase, in response to glycine betaine (GB) and dimethylglycine (DMG). Also controls the expression of gbcAB and dgcAB, which are required for GB and DMG degradation, respectively, in response to both GB and DMG. The GbdR regulon also includes genes encoding sarcosine, glycine and serine catabolic enzymes, the BetX and CbcXWV quaternary amine transport proteins and the acetylcholine esterase gene, choE. Acts by binding directly to the promoter region of the genes. May play an important role during P.aeruginosa interactions with eukaryotes. In Pseudomonas aeruginosa (strain UCBPP-PA14), this protein is HTH-type transcriptional regulator GbdR.